Reading from the N-terminus, the 301-residue chain is GTPase Era (301 aa).

An Era-type G domain is found at 7–175; that stretch reads YCGFIAIVGR…AGIVRKHLPE (169 aa). Residues 15–22 form a G1 region; sequence GRPNVGKS. 15–22 contacts GTP; that stretch reads GRPNVGKS. A G2 region spans residues 41-45; that stretch reads QTTRH. Positions 62 to 65 are G3; the sequence is DTPG. Residues 62 to 66 and 124 to 127 each bind GTP; these read DTPGL and NKVD. The interval 124–127 is G4; sequence NKVD. The tract at residues 154–156 is G5; that stretch reads LSA. A KH type-2 domain is found at 198–283; sequence IREKLMRFLG…HLELWVKVKS (86 aa).

It belongs to the TRAFAC class TrmE-Era-EngA-EngB-Septin-like GTPase superfamily. Era GTPase family. In terms of assembly, monomer.

The protein localises to the cytoplasm. It localises to the cell inner membrane. An essential GTPase that binds both GDP and GTP, with rapid nucleotide exchange. Plays a role in 16S rRNA processing and 30S ribosomal subunit biogenesis and possibly also in cell cycle regulation and energy metabolism. The protein is GTPase Era of Enterobacter sp. (strain 638).